Consider the following 946-residue polypeptide: MRLFIGRRSRSIVISSNNYCLSFQRLRSIPGASSQQRQLSKTPSVTIKSYPDTDLSSDSNYLEVKSCIFNGLLGLVCLNGDIYVAVISGVQNVGFPRWKLIDHQVRPSESIYKVLDVDFYSLENDVFDYLLCERSEQNYDKLIHEHPCGPLKKLFSDGTFYYSRDFDISNIVKNHGLSHNLEYTVDNQDLSFIWNANLASEVINWRSKISNEEKQLFANAGFLTFVIRGYCKTALIEDGPNTASITIISRISTESKQDTLELEGISEDGRVSLFVETEIVVTTEKFIFSYTQVNGSIPLFWESVESQLLYGKKIKVTKDSIEAQGAFDRHFDNLTSKYGVVSIVNIIKPKSESQEKLALTYKDCAESKGIKITNIEYSSSVLTKSPHKLLYLLKQDIYEFGAFAYDISRGIYFAKQTGVLRISAFDSIEKPNTVERLVSKEVLELTTNEIDVFELTSPFLDAHDKLWSENYYWLDRTYTKHTKNSGKYTKVYSKLFGSRVRLYDPLHIYISQYLKQLRSKYTFEKDISIFAGTFNISGKIPKDDIKDWIFPKSMSKEDEMADLYVIGLEEVVELTPGHMLATDPYVRQFWEKKILTLLNGPGRKKKYIRLWSTQLGGILLLLFMNETEYSKVKHIEGDVKKTGFGGMASNKGAVAVSFKYSATRFCVLVSHLAAGLENVEQRHNDYKTIAKSIRFSKGLRIKDHDAIIWMGDFNYRILMSNEDVRRKIVSKEYASLFEKDQLNQQMIAGESFPYFHEMAIDFPPTYKFDPGTKNYDTSEKMRIPAWTDRILSRGEVLEQLEYKCCEDILFSDHRPVYAIFRARVTVVDEQKKTTLGTQIYEKIMERLEGLDDDEKIAVLSDDAFVIESFEGSDSIAGPTHSPTPIPEPKRGRKLPPPSSDLKKWWIGSGKQVKVVLDVDPAVYMINPKRDPNPFVENEDEPLFIER.

The 330-residue stretch at 151–480 (LKKLFSDGTF…YYWLDRTYTK (330 aa)) folds into the SAC domain. Disordered stretches follow at residues 872-902 (SDSI…SDLK) and 927-946 (PKRD…FIER). Residues 936-946 (ENEDEPLFIER) show a composition bias toward acidic residues.

It belongs to the synaptojanin family. This sequence in the central section; belongs to the inositol 1,4,5-trisphosphate 5-phosphatase family. As to quaternary structure, interacts with IRS4 and TAX4.

It localises to the cytoplasm. Its subcellular location is the cytoskeleton. The protein resides in the actin patch. It carries out the reaction a 1,2-diacyl-sn-glycero-3-phospho-(1D-myo-inositol-4,5-bisphosphate) + H2O = a 1,2-diacyl-sn-glycero-3-phospho-(1D-myo-inositol 4-phosphate) + phosphate. With respect to regulation, IRS4 and TAX4 are both positive regulator of INP51 activity and phosphatidylinositol 4,5-bisphosphate turnover. Its function is as follows. Controls the cellular levels and subcellular distribution of phosphatidylinositol 4,5-bisphosphate (PtdIns(4,5)P2). Does not utilize phosphatidylinositol 3,5-bisphosphate (PtdIns(3,5)P2), nor phosphatidylinositol 3-phosphate (PtdIns(3)P) and phosphatidylinositol 4-phosphate (PtdIns(4)P). Plays an essential role in a TGN (trans Golgi network)-to-early endosome pathway. Involved in endocytosis and acts as a negative regulator of the Slm pathway which modulates polarized actin assembly and growth. This chain is Phosphatidylinositol 4,5-bisphosphate 5-phosphatase INP51 (INP51), found in Saccharomyces cerevisiae (strain ATCC 204508 / S288c) (Baker's yeast).